We begin with the raw amino-acid sequence, 409 residues long: Probable aspartate/prephenate aminotransferase (409 aa).

Residues glycine 39, tryptophan 125, and asparagine 175 each contribute to the L-aspartate site. Lysine 239 carries the N6-(pyridoxal phosphate)lysine modification. Arginine 375 contributes to the L-aspartate binding site.

Belongs to the class-I pyridoxal-phosphate-dependent aminotransferase family. Homodimer. It depends on pyridoxal 5'-phosphate as a cofactor.

Its subcellular location is the cytoplasm. It carries out the reaction L-aspartate + 2-oxoglutarate = oxaloacetate + L-glutamate. The catalysed reaction is L-arogenate + 2-oxoglutarate = prephenate + L-glutamate. In terms of biological role, catalyzes the reversible conversion of aspartate and 2-oxoglutarate to glutamate and oxaloacetate. Can also transaminate prephenate in the presence of glutamate. In Rickettsia felis (strain ATCC VR-1525 / URRWXCal2) (Rickettsia azadi), this protein is Probable aspartate/prephenate aminotransferase (aatA).